A 365-amino-acid polypeptide reads, in one-letter code: Histidine biosynthesis bifunctional protein HisB (365 aa).

Residues 1-176 are histidinol-phosphatase; it reads MTQQPTLFID…VADPKGLGQP (176 aa). D10 functions as the Nucleophile in the catalytic mechanism. Mg(2+) is bound by residues D10 and D12. The Proton donor role is filled by D12. Positions 93, 95, 101, and 103 each coordinate Zn(2+). D130 is a binding site for Mg(2+). Residues 177 to 365 are imidazoleglycerol-phosphate dehydratase; it reads RHAVVARKTK…NEMPSSKGVL (189 aa).

This sequence in the N-terminal section; belongs to the histidinol-phosphatase family. In the C-terminal section; belongs to the imidazoleglycerol-phosphate dehydratase family. Mg(2+) serves as cofactor. The cofactor is Zn(2+).

It is found in the cytoplasm. The catalysed reaction is D-erythro-1-(imidazol-4-yl)glycerol 3-phosphate = 3-(imidazol-4-yl)-2-oxopropyl phosphate + H2O. It catalyses the reaction L-histidinol phosphate + H2O = L-histidinol + phosphate. It participates in amino-acid biosynthesis; L-histidine biosynthesis; L-histidine from 5-phospho-alpha-D-ribose 1-diphosphate: step 6/9. It functions in the pathway amino-acid biosynthesis; L-histidine biosynthesis; L-histidine from 5-phospho-alpha-D-ribose 1-diphosphate: step 8/9. This chain is Histidine biosynthesis bifunctional protein HisB, found in Mannheimia succiniciproducens (strain KCTC 0769BP / MBEL55E).